The chain runs to 544 residues: Chaperonin GroEL 3 (544 aa).

Residues 30–33 (TLGP), Lys-51, 87–91 (DGTTT), Gly-415, and Asp-496 each bind ATP.

The protein belongs to the chaperonin (HSP60) family. As to quaternary structure, forms a cylinder of 14 subunits composed of two heptameric rings stacked back-to-back. Interacts with the co-chaperonin GroES.

The protein localises to the cytoplasm. The catalysed reaction is ATP + H2O + a folded polypeptide = ADP + phosphate + an unfolded polypeptide.. Together with its co-chaperonin GroES, plays an essential role in assisting protein folding. The GroEL-GroES system forms a nano-cage that allows encapsulation of the non-native substrate proteins and provides a physical environment optimized to promote and accelerate protein folding. The chain is Chaperonin GroEL 3 from Rhizobium etli (strain ATCC 51251 / DSM 11541 / JCM 21823 / NBRC 15573 / CFN 42).